A 389-amino-acid chain; its full sequence is Chalcone synthase 1A (389 aa).

The active site involves Cys-164.

It belongs to the thiolase-like superfamily. Chalcone/stilbene synthases family.

It catalyses the reaction (E)-4-coumaroyl-CoA + 3 malonyl-CoA + 3 H(+) = 2',4,4',6'-tetrahydroxychalcone + 3 CO2 + 4 CoA. Its pathway is secondary metabolite biosynthesis; flavonoid biosynthesis. Its function is as follows. The primary product of this enzyme is 4,2',4',6'-tetrahydroxychalcone (also termed naringenin-chalcone or chalcone) which can under specific conditions spontaneously isomerize into naringenin. In Pisum sativum (Garden pea), this protein is Chalcone synthase 1A (CHS-1A).